The primary structure comprises 274 residues: Hydroxyethylthiazole kinase (274 aa).

A substrate-binding site is contributed by methionine 54. Residues arginine 129 and threonine 175 each coordinate ATP. Glycine 202 contributes to the substrate binding site.

Belongs to the Thz kinase family. It depends on Mg(2+) as a cofactor.

The catalysed reaction is 5-(2-hydroxyethyl)-4-methylthiazole + ATP = 4-methyl-5-(2-phosphooxyethyl)-thiazole + ADP + H(+). The protein operates within cofactor biosynthesis; thiamine diphosphate biosynthesis; 4-methyl-5-(2-phosphoethyl)-thiazole from 5-(2-hydroxyethyl)-4-methylthiazole: step 1/1. In terms of biological role, catalyzes the phosphorylation of the hydroxyl group of 4-methyl-5-beta-hydroxyethylthiazole (THZ). The sequence is that of Hydroxyethylthiazole kinase from Granulibacter bethesdensis (strain ATCC BAA-1260 / CGDNIH1).